The sequence spans 457 residues: Exodeoxyribonuclease 7 large subunit (457 aa).

Belongs to the XseA family. As to quaternary structure, heterooligomer composed of large and small subunits.

It localises to the cytoplasm. The catalysed reaction is Exonucleolytic cleavage in either 5'- to 3'- or 3'- to 5'-direction to yield nucleoside 5'-phosphates.. Bidirectionally degrades single-stranded DNA into large acid-insoluble oligonucleotides, which are then degraded further into small acid-soluble oligonucleotides. The protein is Exodeoxyribonuclease 7 large subunit of Enterobacter sp. (strain 638).